We begin with the raw amino-acid sequence, 426 residues long: 3-isopropylmalate dehydratase large subunit (426 aa).

Positions 307, 367, and 370 each coordinate [4Fe-4S] cluster.

Belongs to the aconitase/IPM isomerase family. LeuC type 2 subfamily. In terms of assembly, heterodimer of LeuC and LeuD. It depends on [4Fe-4S] cluster as a cofactor.

It catalyses the reaction (2R,3S)-3-isopropylmalate = (2S)-2-isopropylmalate. It participates in amino-acid biosynthesis; L-leucine biosynthesis; L-leucine from 3-methyl-2-oxobutanoate: step 2/4. Catalyzes the isomerization between 2-isopropylmalate and 3-isopropylmalate, via the formation of 2-isopropylmaleate. This Sulfurovum sp. (strain NBC37-1) protein is 3-isopropylmalate dehydratase large subunit.